A 78-amino-acid chain; its full sequence is Large ribosomal subunit protein bL28 (78 aa).

Positions 1–25 are disordered; the sequence is MSRVCQVTGKRPAVGNNRSHARNAT.

It belongs to the bacterial ribosomal protein bL28 family.

This is Large ribosomal subunit protein bL28 from Vibrio vulnificus (strain CMCP6).